The primary structure comprises 399 residues: Bombesin receptor subtype-3 (399 aa).

Topologically, residues 1–41 (MSQKQPQSPNQTLISITNDTESSSSVVSNDTTNKGWTGDNS) are extracellular. Residues N10 and N18 are each glycosylated (N-linked (GlcNAc...) asparagine). Residues 42 to 63 (PGIEALCAIYITYAVIISVGIL) traverse the membrane as a helical segment. Residues 64 to 82 (GNAILIKVFFKTKSMQTVP) are Cytoplasmic-facing. The chain crosses the membrane as a helical span at residues 83–103 (NIFITSLALGDLLLLLTCVPV). Over 104-121 (DATHYLAEGWLFGRIGCK) the chain is Extracellular. C120 and C203 are oxidised to a cystine. The helical transmembrane segment at 122–143 (VLSFIRLTSVGVSVFTLTILSA) threads the bilayer. The Cytoplasmic portion of the chain corresponds to 144-163 (DRYKAVVKPLERQPSNAILK). A helical membrane pass occupies residues 164-184 (TCAKAGCIWIMSMIFALPEAI). Topologically, residues 185-220 (FSNVHTLRDPNKNMTSEWCAFYPVSEKLLQEIHALL) are extracellular. Residues 221-241 (SFLVFYIIPLSIISVYYSLIA) traverse the membrane as a helical segment. Residues 242-272 (RTLYKSTLNIPTEEQSHARKQVESRKRIAKT) are Cytoplasmic-facing. Residues 273–293 (VLVLVALFALCWLPNHLLNLY) form a helical membrane-spanning segment. Residues 294-313 (HSFTHKAYEDSSAIHFIVTI) lie on the Extracellular side of the membrane. Residues 314–333 (FSRVLAFSNSCVNPFALYWL) traverse the membrane as a helical segment. Over 334–399 (SKTFQKQFKA…RPMKKEENRV (66 aa)) the chain is Cytoplasmic. C347 is lipidated: S-palmitoyl cysteine.

The protein belongs to the G-protein coupled receptor 1 family. Interacts with C6orf89. Mainly in uteri of pregnant animals.

The protein resides in the cell membrane. Its function is as follows. Role in sperm cell division, maturation, or function. The relative order of ligand affinity is GRP = neuromedin-C &gt;&gt; neuromedin-B. This receptor mediates its action by association with G proteins that activate a phosphatidylinositol-calcium second messenger system. The sequence is that of Bombesin receptor subtype-3 (BRS3) from Cavia porcellus (Guinea pig).